The chain runs to 770 residues: tRNA(Met) cytidine acetyltransferase TmcA 2 (770 aa).

The ATP site is built by Gln209 and Arg390. In terms of domain architecture, N-acetyltransferase spans 458–608 (MIMLDGIHHK…YPVVVIRPIS (151 aa)). 533–535 (IAV) is an acetyl-CoA binding site.

It belongs to the TmcA family.

The protein resides in the cytoplasm. The catalysed reaction is cytidine(34) in elongator tRNA(Met) + acetyl-CoA + ATP + H2O = N(4)-acetylcytidine(34) in elongator tRNA(Met) + ADP + phosphate + CoA + H(+). It catalyses the reaction a cytidine in RNA + acetyl-CoA + ATP + H2O = an N(4)-acetylcytidine in RNA + ADP + phosphate + CoA + H(+). It carries out the reaction a cytidine in tRNA + acetyl-CoA + ATP + H2O = an N(4)-acetylcytidine in tRNA + ADP + phosphate + CoA + H(+). The enzyme catalyses a cytidine in mRNA + acetyl-CoA + ATP + H2O = an N(4)-acetylcytidine in mRNA + ADP + phosphate + CoA + H(+). Catalyzes the formation of N(4)-acetylcytidine (ac(4)C) at the wobble position of tRNA(Met), by using acetyl-CoA as an acetyl donor and ATP (or GTP). In terms of biological role, catalyzes the formation of 41 N(4)-acetylcytidine (ac(4)C) sites in RNA, almost always on the middle C of a CCG motif. Modifications are found mostly in tRNA, with small amounts found in rRNA and mRNA. This chain is tRNA(Met) cytidine acetyltransferase TmcA 2, found in Saccharolobus solfataricus (strain ATCC 35092 / DSM 1617 / JCM 11322 / P2) (Sulfolobus solfataricus).